Here is a 316-residue protein sequence, read N- to C-terminus: Ribosomal RNA small subunit methyltransferase H (316 aa).

Residues 39 to 41 (GGH), Asp56, Phe82, Asp103, and Gln110 each bind S-adenosyl-L-methionine.

Belongs to the methyltransferase superfamily. RsmH family.

The protein resides in the cytoplasm. It catalyses the reaction cytidine(1402) in 16S rRNA + S-adenosyl-L-methionine = N(4)-methylcytidine(1402) in 16S rRNA + S-adenosyl-L-homocysteine + H(+). Functionally, specifically methylates the N4 position of cytidine in position 1402 (C1402) of 16S rRNA. This chain is Ribosomal RNA small subunit methyltransferase H, found in Methylacidiphilum infernorum (isolate V4) (Methylokorus infernorum (strain V4)).